A 370-amino-acid polypeptide reads, in one-letter code: MVWALPRTSSPSCIAPSYKPDSGWIKMSAEWLIDWSCLLNGLRDLIAGCIQAVRDCNSFALTTVICLLMLFAWYCYRVGKDQPRSPFATVNLLIQSSEAKGLQNGFAYCHSRECVRCTHNDGLNQKLYHNLQEYAKRYSWSGMGRIHKGIREQGRYLNNRPSIQKPEVFFLPDLPTMPYFPRDAQKHDVELLEQNFATILSEFEAIYKAFSNCSLPQGWKVNSTPSGEWFTFYLVNQGVTIPSNCKKCPRTYRLLGNLRTFIGNNVFGNACISVLTPGTVITEHYGPTNIRIRCHLGLRIPGNCELVVGGEPQCWAEGHCLLFDDSFLHTAFHEGSAEEGPRVIFMVDLWHPNVAAAERQALDSIFAPGR.

The Cytoplasmic portion of the chain corresponds to 1–57 (MVWALPRTSSPSCIAPSYKPDSGWIKMSAEWLIDWSCLLNGLRDLIAGCIQAVRDCN). Residues 58–78 (SFALTTVICLLMLFAWYCYRV) traverse the membrane as a helical segment. Topologically, residues 79-370 (GKDQPRSPFA…ALDSIFAPGR (292 aa)) are lumenal. N-linked (GlcNAc...) asparagine glycosylation occurs at N212. 2-oxoglutarate-binding residues include W229 and S273. H284 serves as a coordination point for Fe cation. 293 to 295 (RCH) is a binding site for 2-oxoglutarate. A Fe cation-binding site is contributed by H329. R342 contacts 2-oxoglutarate.

Belongs to the aspartyl/asparaginyl beta-hydroxylase family. Fe cation serves as cofactor.

It is found in the membrane. May function as 2-oxoglutarate-dependent dioxygenase. In Xenopus tropicalis (Western clawed frog), this protein is Aspartate beta-hydroxylase domain-containing protein 2 (asphd2).